The following is a 108-amino-acid chain: UPF0060 membrane protein Mfla_0485 (108 aa).

A run of 4 helical transmembrane segments spans residues 7–27 (FSLFILTALAEILGCYLPYLW), 33–53 (SVWLLLPAAISLAVFAWLLSL), 63–83 (AAYGGVYIFVALGWLWLVDGI), and 87–107 (TWDFVGVGVALAGMAIIMFAP).

This sequence belongs to the UPF0060 family.

The protein resides in the cell inner membrane. The sequence is that of UPF0060 membrane protein Mfla_0485 from Methylobacillus flagellatus (strain ATCC 51484 / DSM 6875 / VKM B-1610 / KT).